Here is a 1249-residue protein sequence, read N- to C-terminus: Calmodulin-regulated spectrin-associated protein 3 (1249 aa).

Disordered stretches follow at residues 183-205 (KTEQEAAQRASPAAPADGAAPAQ), 328-385 (PDGH…SMSH), 430-457 (VSSDSLGPPRPAPARTPTQPPPEPGDLP), 473-609 (LLPD…RLEE), 632-696 (LGKS…HEGL), 714-1029 (QRDM…SALA), and 1061-1111 (NNLG…TGPR). A Phosphothreonine modification is found at Thr-184. Residues 189-205 (AQRASPAAPADGAAPAQ) are compositionally biased toward low complexity. Phosphoserine is present on Ser-193. In terms of domain architecture, Calponin-homology (CH) spans 203–312 (PAQPSIRYRK…LVVMLAELFM (110 aa)). Ser-334, Ser-341, Ser-347, Ser-351, Ser-368, Ser-373, and Ser-382 each carry phosphoserine. The span at 341 to 352 (SPPQNNSGSSSP) shows a compositional bias: low complexity. The span at 364-383 (GGPQSPLRGSTGSLKSSPSM) shows a compositional bias: polar residues. Residues 437–454 (PPRPAPARTPTQPPPEPG) are compositionally biased toward pro residues. Phosphoserine occurs at positions 547, 554, and 560. The span at 568–579 (AERKKQLVKAEA) shows a compositional bias: basic and acidic residues. Positions 594–604 (EALSSEMSELS) are enriched in low complexity. The stretch at 594 to 628 (EALSSEMSELSARLEEKRRAIEAQKRRIEAIFAKH) forms a coiled coil. Positions 647–657 (GEAEAEAEEAD) are enriched in acidic residues. Phosphoserine is present on Ser-685. Residues 696 to 729 (LGEYNRAVSKLSAALSSLQRDMQRLTDQQQRLLA) are a coiled coil. A compositionally biased stretch (pro residues) spans 731–741 (PEAPGSAPPPA). Positions 754-779 (AASPSPARRVPATRRSPGPGPSQSPR) are enriched in low complexity. Ser-769 is modified (phosphoserine). Phosphothreonine is present on Thr-799. Ser-814 carries the post-translational modification Phosphoserine. Residues 814–825 (SPSQVPVQTRSS) are compositionally biased toward polar residues. Residues 889–940 (YKDEDKPEDEMAQKRASLLERQQRRAEEARRRKQWQEVEKEQRREEAARLAQ) are compositionally biased toward basic and acidic residues. A coiled-coil region spans residues 896 to 935 (EDEMAQKRASLLERQQRRAEEARRRKQWQEVEKEQRREEA). Residues 950 to 964 (VSAVPMATPAPAARA) show a composition bias toward low complexity. Residues 970–998 (VGPRKGDFTRQEYERRAQLKLMDDLDKVL) show a composition bias toward basic and acidic residues. Phosphoserine is present on Ser-1074. Positions 1109 to 1243 (GPRLYKEPSA…QGKKPTTPKK (135 aa)) constitute a CKK domain.

The protein belongs to the CAMSAP1 family. In terms of assembly, interacts with PLEKHA7. Interacts with CAMSAP2. Interacts with KATNA1 and KATNB1; leading to regulate the length of CAMSAP3-decorated microtubule stretches. Interacts with AKAP9; regulating Golgi assembly in epithelial cells. Interacts with MACF1. Interacts with AKNA.

The protein resides in the cytoplasm. It localises to the cytoskeleton. Its subcellular location is the cell junction. The protein localises to the adherens junction. It is found in the cilium axoneme. The protein resides in the cilium basal body. Functionally, key microtubule-organizing protein that specifically binds the minus-end of non-centrosomal microtubules and regulates their dynamics and organization. Specifically recognizes growing microtubule minus-ends and autonomously decorates and stabilizes microtubule lattice formed by microtubule minus-end polymerization. Acts on free microtubule minus-ends that are not capped by microtubule-nucleating proteins or other factors and protects microtubule minus-ends from depolymerization. In addition, it also reduces the velocity of microtubule polymerization. Required for the biogenesis and the maintenance of zonula adherens by anchoring the minus-end of microtubules to zonula adherens and by recruiting the kinesin KIFC3 to those junctional sites. Required for orienting the apical-to-basal polarity of microtubules in epithelial cells: acts by tethering non-centrosomal microtubules to the apical cortex, leading to their longitudinal orientation. Plays a key role in early embryos, which lack centrosomes: accumulates at the microtubule bridges that connect pairs of cells and enables the formation of a non-centrosomal microtubule-organizing center that directs intracellular transport in the early embryo. Couples non-centrosomal microtubules with actin: interaction with MACF1 at the minus ends of non-centrosomal microtubules, tethers the microtubules to actin filaments, regulating focal adhesion size and cell migration. Plays a key role in the generation of non-centrosomal microtubules by accumulating in the pericentrosomal region and cooperating with KATNA1 to release non-centrosomal microtubules from the centrosome. Through the microtubule cytoskeleton, also regulates the organization of cellular organelles including the Golgi and the early endosomes. Through interaction with AKAP9, involved in translocation of Golgi vesicles in epithelial cells, where microtubules are mainly non-centrosomal. Plays an important role in motile cilia function by facilitatating proper orientation of basal bodies and formation of central microtubule pairs in motile cilia. In Homo sapiens (Human), this protein is Calmodulin-regulated spectrin-associated protein 3.